Here is a 458-residue protein sequence, read N- to C-terminus: UDP-N-acetylmuramate--L-alanine ligase (458 aa).

Position 112-118 (112-118 (GTHGKTT)) interacts with ATP.

The protein belongs to the MurCDEF family.

Its subcellular location is the cytoplasm. The enzyme catalyses UDP-N-acetyl-alpha-D-muramate + L-alanine + ATP = UDP-N-acetyl-alpha-D-muramoyl-L-alanine + ADP + phosphate + H(+). It participates in cell wall biogenesis; peptidoglycan biosynthesis. Cell wall formation. The sequence is that of UDP-N-acetylmuramate--L-alanine ligase from Geotalea uraniireducens (strain Rf4) (Geobacter uraniireducens).